We begin with the raw amino-acid sequence, 185 residues long: Elongation factor P (185 aa).

The protein belongs to the elongation factor P family.

The protein localises to the cytoplasm. It functions in the pathway protein biosynthesis; polypeptide chain elongation. Functionally, involved in peptide bond synthesis. Stimulates efficient translation and peptide-bond synthesis on native or reconstituted 70S ribosomes in vitro. Probably functions indirectly by altering the affinity of the ribosome for aminoacyl-tRNA, thus increasing their reactivity as acceptors for peptidyl transferase. The protein is Elongation factor P of Endomicrobium trichonymphae.